The chain runs to 494 residues: Glutamate--tRNA ligase (494 aa).

The short motif at 9-19 is the 'HIGH' region element; that stretch reads PSPTGDPHVGT. Positions 250–254 match the 'KMSKS' region motif; it reads KLSKR. Lys253 provides a ligand contact to ATP.

The protein belongs to the class-I aminoacyl-tRNA synthetase family. Glutamate--tRNA ligase type 1 subfamily. Monomer.

It localises to the cytoplasm. It carries out the reaction tRNA(Glu) + L-glutamate + ATP = L-glutamyl-tRNA(Glu) + AMP + diphosphate. Its function is as follows. Catalyzes the attachment of glutamate to tRNA(Glu) in a two-step reaction: glutamate is first activated by ATP to form Glu-AMP and then transferred to the acceptor end of tRNA(Glu). In Alcanivorax borkumensis (strain ATCC 700651 / DSM 11573 / NCIMB 13689 / SK2), this protein is Glutamate--tRNA ligase.